The primary structure comprises 1024 residues: Error-prone DNA polymerase (1024 aa).

This sequence belongs to the DNA polymerase type-C family. DnaE2 subfamily.

Its subcellular location is the cytoplasm. The enzyme catalyses DNA(n) + a 2'-deoxyribonucleoside 5'-triphosphate = DNA(n+1) + diphosphate. In terms of biological role, DNA polymerase involved in damage-induced mutagenesis and translesion synthesis (TLS). It is not the major replicative DNA polymerase. The protein is Error-prone DNA polymerase of Vibrio vulnificus (strain YJ016).